A 357-amino-acid polypeptide reads, in one-letter code: 3-dehydroquinate synthase (357 aa).

NAD(+)-binding positions include 104-108, 128-129, Lys141, and 168-171; these read GVVGD, TT, and FLET. Zn(2+)-binding residues include Glu183, His243, and His260.

This sequence belongs to the sugar phosphate cyclases superfamily. Dehydroquinate synthase family. It depends on NAD(+) as a cofactor. The cofactor is Co(2+). Zn(2+) is required as a cofactor.

The protein localises to the cytoplasm. The catalysed reaction is 7-phospho-2-dehydro-3-deoxy-D-arabino-heptonate = 3-dehydroquinate + phosphate. It functions in the pathway metabolic intermediate biosynthesis; chorismate biosynthesis; chorismate from D-erythrose 4-phosphate and phosphoenolpyruvate: step 2/7. Its function is as follows. Catalyzes the conversion of 3-deoxy-D-arabino-heptulosonate 7-phosphate (DAHP) to dehydroquinate (DHQ). The protein is 3-dehydroquinate synthase of Streptococcus pyogenes serotype M6 (strain ATCC BAA-946 / MGAS10394).